Consider the following 310-residue polypeptide: Protein N-terminal asparagine amidohydrolase (310 aa).

In terms of assembly, monomer.

It is found in the cytoplasm. It catalyses the reaction N-terminal L-asparaginyl-[protein] + H2O + H(+) = N-terminal L-aspartyl-[protein] + NH4(+). Functionally, N-terminal asparagine deamidase that mediates deamidation of N-terminal asparagine residues to aspartate. Required for the ubiquitin-dependent turnover of intracellular proteins that initiate with Met-Asn. These proteins are acetylated on the retained initiator methionine and can subsequently be modified by the removal of N-acetyl methionine by acylaminoacid hydrolase (AAH). Conversion of the resulting N-terminal asparagine to aspartate by NTAN1/PNAD renders the protein susceptible to arginylation, polyubiquitination and degradation as specified by the N-end rule. This enzyme does not act on substrates with internal or C-terminal asparagines and does not act on glutamine residues in any position. The sequence is that of Protein N-terminal asparagine amidohydrolase from Mus musculus (Mouse).